The following is a 275-amino-acid chain: 3-deoxy-manno-octulosonate cytidylyltransferase (275 aa).

The protein belongs to the KdsB family.

Its subcellular location is the cytoplasm. It catalyses the reaction 3-deoxy-alpha-D-manno-oct-2-ulosonate + CTP = CMP-3-deoxy-beta-D-manno-octulosonate + diphosphate. Its pathway is nucleotide-sugar biosynthesis; CMP-3-deoxy-D-manno-octulosonate biosynthesis; CMP-3-deoxy-D-manno-octulosonate from 3-deoxy-D-manno-octulosonate and CTP: step 1/1. It functions in the pathway bacterial outer membrane biogenesis; lipopolysaccharide biosynthesis. In terms of biological role, activates KDO (a required 8-carbon sugar) for incorporation into bacterial lipopolysaccharide in Gram-negative bacteria. The polypeptide is 3-deoxy-manno-octulosonate cytidylyltransferase (Psychrobacter sp. (strain PRwf-1)).